Reading from the N-terminus, the 417-residue chain is Gamma-glutamyl phosphate reductase (417 aa).

This sequence belongs to the gamma-glutamyl phosphate reductase family.

It localises to the cytoplasm. It carries out the reaction L-glutamate 5-semialdehyde + phosphate + NADP(+) = L-glutamyl 5-phosphate + NADPH + H(+). Its pathway is amino-acid biosynthesis; L-proline biosynthesis; L-glutamate 5-semialdehyde from L-glutamate: step 2/2. Catalyzes the NADPH-dependent reduction of L-glutamate 5-phosphate into L-glutamate 5-semialdehyde and phosphate. The product spontaneously undergoes cyclization to form 1-pyrroline-5-carboxylate. This is Gamma-glutamyl phosphate reductase from Enterococcus faecalis (strain ATCC 700802 / V583).